Consider the following 556-residue polypeptide: Copine-7 (556 aa).

C2 domains lie at 1 to 128 and 135 to 262; these read MSGD…TRPL and NAGK…AQWD. D168, D174, D230, D232, and D238 together coordinate Ca(2+). In terms of domain architecture, VWFA spans 305-504; that stretch reads HCTVAIDFTA…PALRDIVQFV (200 aa). The tract at residues 536–556 is disordered; it reads KDLPPRSLGGQTGEAGPSSAP.

The protein belongs to the copine family. Ca(2+) is required as a cofactor.

Its subcellular location is the cytoplasm. The protein localises to the nucleus. It is found in the cell membrane. Functionally, calcium-dependent phospholipid-binding protein that may play a role in calcium-mediated intracellular processes. This is Copine-7 from Rattus norvegicus (Rat).